We begin with the raw amino-acid sequence, 280 residues long: Proteasome subunit beta (280 aa).

A propeptide spans Met-1–Gly-53 (removed in mature form; by autocatalysis). Thr-54 acts as the Nucleophile in catalysis.

Belongs to the peptidase T1B family. The 20S proteasome core is composed of 14 alpha and 14 beta subunits that assemble into four stacked heptameric rings, resulting in a barrel-shaped structure. The two inner rings, each composed of seven catalytic beta subunits, are sandwiched by two outer rings, each composed of seven alpha subunits. The catalytic chamber with the active sites is on the inside of the barrel. Has a gated structure, the ends of the cylinder being occluded by the N-termini of the alpha-subunits. Is capped by the proteasome-associated ATPase, ARC.

It localises to the cytoplasm. The catalysed reaction is Cleavage of peptide bonds with very broad specificity.. It participates in protein degradation; proteasomal Pup-dependent pathway. With respect to regulation, the formation of the proteasomal ATPase ARC-20S proteasome complex, likely via the docking of the C-termini of ARC into the intersubunit pockets in the alpha-rings, may trigger opening of the gate for substrate entry. Interconversion between the open-gate and close-gate conformations leads to a dynamic regulation of the 20S proteasome proteolysis activity. Component of the proteasome core, a large protease complex with broad specificity involved in protein degradation. The protein is Proteasome subunit beta of Geodermatophilus obscurus (strain ATCC 25078 / DSM 43160 / JCM 3152 / CCUG 61914 / KCC A-0152 / KCTC 9177 / NBRC 13315 / NRRL B-3577 / G-20).